The following is a 754-amino-acid chain: 5-methyltetrahydropteroyltriglutamate--homocysteine methyltransferase (754 aa).

5-methyltetrahydropteroyltri-L-glutamate contacts are provided by residues 15 to 18 (RELK) and Lys114. L-homocysteine is bound by residues 430-432 (IGS) and Glu483. Residues 430 to 432 (IGS) and Glu483 each bind L-methionine. Residues 514–515 (RC) and Trp560 each bind 5-methyltetrahydropteroyltri-L-glutamate. Asp598 contacts L-homocysteine. Residue Asp598 coordinates L-methionine. Glu604 provides a ligand contact to 5-methyltetrahydropteroyltri-L-glutamate. 3 residues coordinate Zn(2+): His641, Cys643, and Glu665. The Proton donor role is filled by His694. Cys726 serves as a coordination point for Zn(2+).

This sequence belongs to the vitamin-B12 independent methionine synthase family. It depends on Zn(2+) as a cofactor.

The enzyme catalyses 5-methyltetrahydropteroyltri-L-glutamate + L-homocysteine = tetrahydropteroyltri-L-glutamate + L-methionine. It participates in amino-acid biosynthesis; L-methionine biosynthesis via de novo pathway; L-methionine from L-homocysteine (MetE route): step 1/1. Functionally, catalyzes the transfer of a methyl group from 5-methyltetrahydrofolate to homocysteine resulting in methionine formation. The sequence is that of 5-methyltetrahydropteroyltriglutamate--homocysteine methyltransferase from Campylobacter jejuni subsp. doylei (strain ATCC BAA-1458 / RM4099 / 269.97).